The chain runs to 369 residues: Aminomethyltransferase (369 aa).

This sequence belongs to the GcvT family. As to quaternary structure, the glycine cleavage system is composed of four proteins: P, T, L and H.

It catalyses the reaction N(6)-[(R)-S(8)-aminomethyldihydrolipoyl]-L-lysyl-[protein] + (6S)-5,6,7,8-tetrahydrofolate = N(6)-[(R)-dihydrolipoyl]-L-lysyl-[protein] + (6R)-5,10-methylene-5,6,7,8-tetrahydrofolate + NH4(+). The glycine cleavage system catalyzes the degradation of glycine. This Xanthomonas oryzae pv. oryzae (strain PXO99A) protein is Aminomethyltransferase.